We begin with the raw amino-acid sequence, 62 residues long: Large ribosomal subunit protein bL28 (62 aa).

It belongs to the bacterial ribosomal protein bL28 family.

This chain is Large ribosomal subunit protein bL28, found in Streptococcus thermophilus (strain CNRZ 1066).